We begin with the raw amino-acid sequence, 316 residues long: MAQPSIGQRIVVDVPSTTANLGPGFDCLGAALDLNNRFAMRRIEGDSGRFELIIEGNEGSHLRGGPNNLIYRAAQRVWKAAGLEPVGLEAKVRLAVPPARGLGSSASAIVAGLVGANALVGEPLSKEKLLELAIDIEGHPDNVVPSLLGGLCLTAKAASQRWRVVRCVWINSVKAVVAIPSIRLSTSEARRAMPKDIPISDAVENLGALTLLLQGLRTGNGDLITDGMHDRLHEPYRWPLIKGGLDVRDAALNAGAWGCAISGAGPSVLALCPEDKGQAVSQAMVKAWEAEGVASRAPLLSIQSGGSHWQPQIEDE.

An ATP-binding site is contributed by 97–107 (PPARGLGSSAS).

It belongs to the GHMP kinase family. Homoserine kinase subfamily.

Its subcellular location is the cytoplasm. The catalysed reaction is L-homoserine + ATP = O-phospho-L-homoserine + ADP + H(+). Its pathway is amino-acid biosynthesis; L-threonine biosynthesis; L-threonine from L-aspartate: step 4/5. Functionally, catalyzes the ATP-dependent phosphorylation of L-homoserine to L-homoserine phosphate. The polypeptide is Homoserine kinase (Prochlorococcus marinus (strain MIT 9313)).